The primary structure comprises 502 residues: Glycerol kinase (502 aa).

Residue T14 participates in ADP binding. ATP is bound by residues T14, T15, and S16. Residue T14 participates in sn-glycerol 3-phosphate binding. An ADP-binding site is contributed by R18. R84, E85, and Y136 together coordinate sn-glycerol 3-phosphate. 3 residues coordinate glycerol: R84, E85, and Y136. At H232 the chain carries Phosphohistidine; by HPr. D246 is a sn-glycerol 3-phosphate binding site. 2 residues coordinate glycerol: D246 and Q247. ADP-binding residues include T268 and G311. Residues T268, G311, Q315, and G412 each coordinate ATP. Residues G412 and N416 each coordinate ADP.

The protein belongs to the FGGY kinase family. As to quaternary structure, homotetramer and homodimer (in equilibrium). In terms of processing, the phosphoenolpyruvate-dependent sugar phosphotransferase system (PTS), including enzyme I, and histidine-containing protein (HPr) are required for the phosphorylation, which leads to the activation of the enzyme.

It carries out the reaction glycerol + ATP = sn-glycerol 3-phosphate + ADP + H(+). The protein operates within polyol metabolism; glycerol degradation via glycerol kinase pathway; sn-glycerol 3-phosphate from glycerol: step 1/1. With respect to regulation, activated by phosphorylation and inhibited by fructose 1,6-bisphosphate (FBP). Key enzyme in the regulation of glycerol uptake and metabolism. Catalyzes the phosphorylation of glycerol to yield sn-glycerol 3-phosphate. The polypeptide is Glycerol kinase (Streptococcus pneumoniae (strain P1031)).